The sequence spans 388 residues: MMSPSQASLLFLNVCIFICGEAVQGNCVHHSTDSSVVNIVEDGSNAKDESKSNDTVCKEDCEESCDVKTKITREEKHFMCRNLQNSIVSYTRSTKKLLRNMMDEQQASLDYLSNQVNELMNRVLLLTTEVFRKQLDPFPHRPVQSHGLDCTDIKDTIGSVTKTPSGLYIIHPEGSSYPFEVMCDMDYRGGGRTVIQKRIDGIIDFQRLWCDYLDGFGDLLGEFWLGLKKIFYIVNQKNTSFMLYVALESEDDTLAYASYDNFWLEDETRFFKMHLGRYSGNAGDAFRGLKKEDNQNAMPFSTSDVDNDGCRPACLVNGQSVKSCSHLHNKTGWWFNECGLANLNGIHHFSGKLLATGIQWGTWTKNNSPVKIKSVSMKIRRMYNPYFK.

Residues 1-25 (MMSPSQASLLFLNVCIFICGEAVQG) form the signal peptide. Asparagine 53 carries N-linked (GlcNAc...) asparagine glycosylation. Residues 98-123 (LRNMMDEQQASLDYLSNQVNELMNRV) adopt a coiled-coil conformation. The Fibrinogen C-terminal domain occupies 141–383 (RPVQSHGLDC…SVSMKIRRMY (243 aa)). Asparagine 238 carries N-linked (GlcNAc...) asparagine glycosylation. 2 cysteine pairs are disulfide-bonded: cysteine 310-cysteine 314 and cysteine 324-cysteine 338. Asparagine 329 is a glycosylation site (N-linked (GlcNAc...) asparagine).

As to expression, mainly expressed in adult heart.

It is found in the secreted. In Homo sapiens (Human), this protein is Angiopoietin-related protein 5 (ANGPTL5).